Consider the following 301-residue polypeptide: MLNSSRKYACRSLFRQANVSIKGLFYNGGAYRRGFSTGCCLRSDNKESPSARQPLDRLQLGDEINEPEPIRTRFFQFSRWKATIALLLLSGGTYAYLSRKRRLLETEKEADANRAYGSVALGGPFNLTDFNGKPFTEENLKGKFSILYFGFSHCPDICPEELDRLTYWISELDDKDHIKIQPLFISCDPARDTPDVLKEYLSDFHPAIIGLTGTYDQVKSVCKKYKVYFSTPRDVKPNQDYLVDHSIFFYLIDPEGQFIDALGRNYDEQSGLEKIREQIQAYVPKEERERRSKKWYSFIFN.

The helical transmembrane segment at 82–98 (ATIALLLLSGGTYAYLS) threads the bilayer. Positions 101 to 284 (RRLLETEKEA…IREQIQAYVP (184 aa)) constitute a Thioredoxin domain. Cu cation-binding residues include cysteine 154, cysteine 158, and histidine 245.

The protein belongs to the SCO1/2 family.

The protein resides in the mitochondrion inner membrane. Its function is as follows. Acts as a copper chaperone, transporting copper to the Cu(A) site on the cytochrome c oxidase subunit II (COX2). The protein is Protein SCO2, mitochondrial (SCO2) of Saccharomyces cerevisiae (strain ATCC 204508 / S288c) (Baker's yeast).